The chain runs to 877 residues: Dystroglycan 1 (877 aa).

The N-terminal stretch at 1-29 (MRMSAGLSLLIPLWGRTFLLLLSVAVTQS) is a signal peptide. Residues 30 to 408 (RWPSEPSDAV…GHIRPTMTIP (379 aa)) form a required for laminin recognition region. The interval 49–71 (SMHSVLSDLHEAVPTVVGIPDGT) is O-glycosylated at one site. A glycan (N-linked (GlcNAc...) asparagine) is linked at asparagine 141. Residues cysteine 182 and cysteine 264 are joined by a disulfide bond. The interval 316-468 (ATPTPVTAIG…PPTRIRTTTS (153 aa)) is mucin-like domain. 3 O-linked (Man6P...) threonine glycosylation sites follow: threonine 317, threonine 319, and threonine 379. Disordered stretches follow at residues 380–444 (PTLG…PVPR) and 458–480 (SPPTRIRTTTSGLPRGEPNQRPE). Residues 413 to 433 (PTAVATPPTPTTKNPRVSXPT) are compositionally biased toward low complexity. An O-glycosylated at seven sites with GalNAc region spans residues 446–468 (TTKAPITRLETASPPTRIRTTTS). One can recognise a Peptidase S72 domain in the interval 585–694 (RAPARFTAKF…MSIAVTGSGS (110 aa)). Residues asparagine 623, asparagine 631, and asparagine 643 are each glycosylated (N-linked (GlcNAc...) asparagine). A disulfide bond links cysteine 651 and cysteine 695. Pro residues predominate over residues 706–717 (PKRVPSEAPPTE). The disordered stretch occupies residues 706-727 (PKRVPSEAPPTEVPDRDPEKSS). Basic and acidic residues predominate over residues 718 to 727 (VPDRDPEKSS). The helical transmembrane segment at 732–757 (YLHTVIPAVVVAAILLIAGIIAMICY) threads the bilayer. The short motif at 758-764 (RKKRKGK) is the Nuclear localization signal element. The residue at position 772 (threonine 772) is a Phosphothreonine. Residues 801-877 (LQEEKAPLPP…YRSPPPYVPP (77 aa)) are required for interaction with CAV3. Residues 805 to 877 (KAPLPPPEYP…YRSPPPYVPP (73 aa)) form a disordered region. The span at 814 to 828 (PNQSVPETTPLNQDT) shows a compositional bias: polar residues. The span at 841 to 852 (NAPPYQPPPPFT) shows a compositional bias: pro residues. The interval 862–877 (PKNMTPYRSPPPYVPP) is required for binding DMD and UTRN. Positions 871–874 (PPPY) match the PPXY motif motif. Tyrosine 874 carries the post-translational modification Phosphotyrosine; by SRC.

Monomer. Heterodimer of alpha- and beta-dystroglycan subunits which are the central components of the dystrophin-glycoprotein complex. This complex then can form a dystrophin-associated glycoprotein complex (DGC) which is composed of three subcomplexes: a cytoplasmic complex comprised of DMD (or UTRN), DTNA and a number of syntrophins, such as SNTB1, SNTB2, SNTG1 and SNTG2, the transmembrane dystroglycan complex, and the sarcoglycan-sarcospan complex. Interacts (via the N-terminal of alphaDAG1) with LARGE1; the interaction enhances laminin binding. Interacts with SGCD. Interacts with AGR2 and AGR3. Interacts (betaDAG1) with DMD; the interaction is inhibited by phosphorylation on the PPXY motif. Interacts (betaDAG1, via its PPXY motif) with UTRN (via its WWW and ZZ domains); the interaction is inhibited by phosphorylation on the PPXY motif. Interacts (betaDAG1, via its phosphorylated PPXY motif) with the SH2 domain-containing proteins, FYN, CSK, NCK and SHC. Interacts (betaDAG1) with CAV3 (via a central WW-like domain); the interaction disrupts the binding of DMD. BetaDAG1 directly interacts with ANK3, but not with ANK2; this interaction does not interfere with DMD-binding and is required for retention at costameres. Identified in a dystroglycan complex that contains at least PRX, DRP2, UTRN, DMD and DAG1. Interacts with POMGNT1. BetaDAG1 interacts with CD93. O-glycosylated. POMGNT1 catalyzes the initial addition of N-acetylglucosamine, giving rise to the GlcNAc(beta1-2)Man(alpha1-)O-Ser/Thr moiety and thus providing the necessary basis for the addition of further carbohydrate moieties. Heavily O-glycosylated comprising of up to two thirds of its mass and the carbohydrate composition differs depending on tissue type. Mucin-type O-glycosylation is important for ligand binding activity. O-mannosylation of alpha-DAG1 is found in high abundance in both brain and muscle where the most abundant glycan is Sia-alpha-2-3-Gal-beta-1-4-Glc-NAc-beta-1-2-Man. In muscle, glycosylation on Thr-317, Thr-319 and Thr-379 by a phosphorylated O-mannosyl glycan with the structure 2-(N-acetylamido)-2-deoxygalactosyl-beta-1,3-2-(N-acetylamido)-2-deoxyglucosyl-beta-1,4-6-phosphomannose is mediated by like-acetylglucosaminyltransferase (LARGE1) protein amd is required for laminin binding. O-glycosylated in the N-terminal region with a core 1 or possibly core 8 glycan. The brain form displays a unique glycosylation pattern which is absent in other tissues; this form shows enhanced binding to laminin LAMA5 compared to the skeletal muscle form. Post-translationally, N-glycosylated. In terms of processing, autolytic cleavage produces the alpha and beta subunits. In cutaneous cells, as well as in certain pathological conditions, shedding of beta-dystroglycan can occur releasing a peptide of about 30 kDa. SRC-mediated phosphorylation of the PPXY motif of the beta subunit recruits SH2 domain-containing proteins, but inhibits binding to WWW domain-containing proteins, DMD and UTRN. This phosphorylation also inhibits nuclear entry.

It is found in the secreted. Its subcellular location is the extracellular space. It localises to the cell membrane. The protein resides in the cytoplasm. The protein localises to the cytoskeleton. It is found in the nucleus. Its subcellular location is the nucleoplasm. It localises to the sarcolemma. The protein resides in the postsynaptic cell membrane. In terms of biological role, the dystroglycan complex is involved in a number of processes including laminin and basement membrane assembly, sarcolemmal stability, cell survival, peripheral nerve myelination, nodal structure, cell migration, and epithelial polarization. Functionally, extracellular peripheral glycoprotein that acts as a receptor for extracellular matrix proteins containing laminin-G domains. Receptor for laminin-2 (LAMA2) and agrin in peripheral nerve Schwann cells. Also acts as a receptor for laminin LAMA5. Transmembrane protein that plays important roles in connecting the extracellular matrix to the cytoskeleton. Acts as a cell adhesion receptor in both muscle and non-muscle tissues. Receptor for both DMD and UTRN and, through these interactions, scaffolds axin to the cytoskeleton. Also functions in cell adhesion-mediated signaling and implicated in cell polarity. This chain is Dystroglycan 1, found in Sus scrofa (Pig).